A 495-amino-acid polypeptide reads, in one-letter code: uncharacterized protein (495 aa).

Low complexity predominate over residues 305–317; that stretch reads DYNNNNNENYSGS. The segment at 305 to 404 is disordered; the sequence is DYNNNNNENY…LDEEDNRKNK (100 aa). The segment covering 335–347 has biased composition (acidic residues); it reads YDNDENNDDENND. Low complexity predominate over residues 348–363; the sequence is ENNNNNNNNNNNNNNN. A compositionally biased stretch (acidic residues) spans 386–398; it reads SDDDEADNELDEE.

This is an uncharacterized protein from Dictyostelium discoideum (Social amoeba).